Reading from the N-terminus, the 670-residue chain is DNA ligase (670 aa).

NAD(+) is bound by residues 34–38, 83–84, and Glu112; these read DAEYD and SL. Lys114 functions as the N6-AMP-lysine intermediate in the catalytic mechanism. 4 residues coordinate NAD(+): Arg135, Glu169, Lys285, and Lys309. Residues Cys403, Cys406, Cys421, and Cys426 each contribute to the Zn(2+) site. The BRCT domain maps to 589 to 670; it reads PASSVLAGKT…FLQEISREEQ (82 aa).

This sequence belongs to the NAD-dependent DNA ligase family. LigA subfamily. It depends on Mg(2+) as a cofactor. Mn(2+) is required as a cofactor.

The enzyme catalyses NAD(+) + (deoxyribonucleotide)n-3'-hydroxyl + 5'-phospho-(deoxyribonucleotide)m = (deoxyribonucleotide)n+m + AMP + beta-nicotinamide D-nucleotide.. Its function is as follows. DNA ligase that catalyzes the formation of phosphodiester linkages between 5'-phosphoryl and 3'-hydroxyl groups in double-stranded DNA using NAD as a coenzyme and as the energy source for the reaction. It is essential for DNA replication and repair of damaged DNA. The chain is DNA ligase from Geobacillus thermodenitrificans (strain NG80-2).